We begin with the raw amino-acid sequence, 370 residues long: ECF RNA polymerase sigma factor SigG (370 aa).

Residues 63 to 129 (EPYRRELLAH…LTALEGRRRR (67 aa)) form a sigma-70 factor domain-2 region. Positions 85 to 88 (DLVQ) match the Polymerase core binding motif. The tract at residues 180–232 (LAFVAALQHLSPRQRAVLLLRDVLQWKSAEVADAIGTSTVAVNSLLQRARSQL) is sigma-70 factor domain-4. Residues 207-226 (SAEVADAIGTSTVAVNSLLQ) constitute a DNA-binding region (H-T-H motif).

Belongs to the sigma-70 factor family. ECF subfamily. As to quaternary structure, interacts transiently with the RNA polymerase catalytic core formed by RpoA, RpoB, RpoC and RpoZ (2 alpha, 1 beta, 1 beta' and 1 omega subunit) to form the RNA polymerase holoenzyme that can initiate transcription.

In terms of biological role, sigma factors are initiation factors that promote the attachment of RNA polymerase to specific initiation sites and are then released. Extracytoplasmic function (ECF) sigma factors are held in an inactive form by a cognate anti-sigma factor until released, although no anti-sigma factor is known for this protein. May be involved in host intracellular survival after infection (strains H37Rv and CDC 1551). A role in the SOS response is controversial; it has been seen in strain CDC 1551 but not in H37Rv. The protein is ECF RNA polymerase sigma factor SigG (sigG) of Mycobacterium tuberculosis (strain CDC 1551 / Oshkosh).